The following is a 239-amino-acid chain: Ribonuclease P protein component 3 (239 aa).

The protein belongs to the eukaryotic/archaeal RNase P protein component 3 family. In terms of assembly, consists of a catalytic RNA component and at least 4-5 protein subunits.

It localises to the cytoplasm. The catalysed reaction is Endonucleolytic cleavage of RNA, removing 5'-extranucleotides from tRNA precursor.. In terms of biological role, part of ribonuclease P, a protein complex that generates mature tRNA molecules by cleaving their 5'-ends. This chain is Ribonuclease P protein component 3, found in Methanosarcina mazei (strain ATCC BAA-159 / DSM 3647 / Goe1 / Go1 / JCM 11833 / OCM 88) (Methanosarcina frisia).